A 413-amino-acid chain; its full sequence is Glutamyl-tRNA reductase (413 aa).

Residues 49–52, S105, 110–112, and Q116 contribute to the substrate site; these read TCNR and EPQ. C50 (nucleophile) is an active-site residue. Position 185-190 (185-190) interacts with NADP(+); sequence GAGETI.

The protein belongs to the glutamyl-tRNA reductase family. As to quaternary structure, homodimer.

It carries out the reaction (S)-4-amino-5-oxopentanoate + tRNA(Glu) + NADP(+) = L-glutamyl-tRNA(Glu) + NADPH + H(+). It functions in the pathway porphyrin-containing compound metabolism; protoporphyrin-IX biosynthesis; 5-aminolevulinate from L-glutamyl-tRNA(Glu): step 1/2. Catalyzes the NADPH-dependent reduction of glutamyl-tRNA(Glu) to glutamate 1-semialdehyde (GSA). The sequence is that of Glutamyl-tRNA reductase from Coxiella burnetii (strain Dugway 5J108-111).